A 237-amino-acid chain; its full sequence is MSNPIYKRILLKLSGEALQGAEGFGIDPSILDRMALEIKELIAMGVEVGVVLGGGNLFRGAKLAKAGMNRVVGDHMGMLATVMNGLAMRDALHRADVNAKLMSAFQLNGICDTYNWSEAIKMLREKRVVIFSGGTGSPFFTTDSAACLRGIEIEADVVLKATKVDGVYNCDPAKNPGAELFNTLTYADVIERELKVMDLAAFTLARDHGMPIRVFNMGKPGALREVVTGLTEGTIIS.

An ATP-binding site is contributed by 12–15; it reads KLSG. Residues 20-25 are involved in allosteric activation by GTP; that stretch reads GAEGFG. Gly-54 lines the UMP pocket. ATP is bound by residues Gly-55 and Arg-59. UMP is bound by residues Asp-74 and 135–142; that span reads TGSPFFTT. 3 residues coordinate ATP: Thr-162, Tyr-168, and Asp-171.

The protein belongs to the UMP kinase family. Homohexamer.

The protein localises to the cytoplasm. It carries out the reaction UMP + ATP = UDP + ADP. The protein operates within pyrimidine metabolism; CTP biosynthesis via de novo pathway; UDP from UMP (UMPK route): step 1/1. Allosterically activated by GTP. Inhibited by UTP. Catalyzes the reversible phosphorylation of UMP to UDP. This chain is Uridylate kinase, found in Actinobacillus succinogenes (strain ATCC 55618 / DSM 22257 / CCUG 43843 / 130Z).